We begin with the raw amino-acid sequence, 541 residues long: Protein wntless homolog (541 aa).

At 1–15 (MAGAIIENMSTKKLC) the chain is on the cytoplasmic side. Residues 16 to 36 (IVGGILLVFQIIAFLVGGLIA) form a helical membrane-spanning segment. Topologically, residues 37–232 (PGPTTAVSYM…GIHQNGGFTK (196 aa)) are lumenal. The interaction with Wnt proteins stretch occupies residues 101–232 (MEMSPWFQFM…GIHQNGGFTK (132 aa)). The chain crosses the membrane as a helical span at residues 233–253 (VWFAMKTFLTPSIFIIMVWYW). Residues 254 to 268 (RRITMMSRPPVLLEK) lie on the Cytoplasmic side of the membrane. Residues 269-289 (VIFALGISMTFINIPVEWFSI) form a helical membrane-spanning segment. At 290–303 (GFDWTWMLLFGDIR) the chain is on the lumenal side. The helical transmembrane segment at 304 to 324 (QGIFYAMLLSFWIIFCGEHMM) threads the bilayer. Residues 325 to 331 (DQHERNH) are Cytoplasmic-facing. The chain crosses the membrane as a helical span at residues 332-352 (IAGYWKQVGPIAVGSFCLFIF). The Lumenal portion of the chain corresponds to 353 to 380 (DMCERGVQLTNPFYSIWTTDIGTELAMA). The helical transmembrane segment at 381–401 (FIIVAGICLCLYFLFLCFMVF) threads the bilayer. Topologically, residues 402–431 (QVFRNISGKQSSLPAMSKVRRLHYEGLIFR) are cytoplasmic. The helical transmembrane segment at 432–452 (FKFLMLITLACAAMTVIFFIV) threads the bilayer. Topologically, residues 453–471 (SQVTEGHWKWGGVTVQVNS) are lumenal. Residues 472-492 (AFFTGIYGMWNLYVFALMFLY) traverse the membrane as a helical segment. The Cytoplasmic segment spans residues 493-541 (APSHKNYGEDQSNGDLGVHSGEELQLTTTITHVDGPTEIYKLTRKEAQE).

Belongs to the wntless family. Interacts with WNT3A. Interacts with WNT1, WNT3 and WNT5A. N-glycosylated.

Its subcellular location is the golgi apparatus membrane. The protein resides in the cytoplasmic vesicle membrane. It localises to the cell membrane. The protein localises to the endoplasmic reticulum membrane. It is found in the early endosome membrane. In terms of biological role, regulates Wnt proteins sorting and secretion in a feedback regulatory mechanism. This reciprocal interaction plays a key role in the regulation of expression, subcellular location, binding and organelle-specific association of Wnt proteins. Plays also an important role in establishment of the anterior-posterior body axis formation during development. This is Protein wntless homolog (WLS) from Homo sapiens (Human).